The primary structure comprises 764 residues: Nucleolar transcription factor 1 (764 aa).

M1 is modified (N-acetylmethionine). Residues 1–21 (MNGEADCPTDLEMAAPKGQDR) form a disordered region. 2 DNA-binding regions (HMG box) span residues 112–180 (PKKP…ARFR) and 196–264 (PEKP…RDYI). T201 carries the post-translational modification Phosphothreonine. A phosphoserine mark is found at S273, S336, and S364. The HMG box 3 DNA-binding region spans 298 to 362 (TKPPPNSYSL…DYEVELLRFL (65 aa)). Residues 370 to 379 (QQRVLGEEKM) are compositionally biased toward basic and acidic residues. Residues 370–411 (QQRVLGEEKMLNINKKQTTSPASKKPSQEGGKGGSEKPKRPV) form a disordered region. Phosphoserine occurs at positions 389, 412, 433, 435, 484, 495, 546, 584, and 638. DNA-binding regions (HMG box) lie at residues 407 to 475 (PKRP…GGER), 482 to 549 (PESP…SEMR), and 568 to 634 (KKPP…DLWV). The interval 456-488 (YKAREAALKAQSERKPGGEREDRGKLPESPKRA) is disordered. The span at 457–488 (KAREAALKAQSERKPGGEREDRGKLPESPKRA) shows a compositional bias: basic and acidic residues. The tract at residues 546 to 576 (SEMRAPPAATNSSKKMKFQGEPKKPPMNGYQ) is disordered. The interval 648–764 (YISNKRKNMT…SGDSSDSDSN (117 aa)) is disordered. A compositionally biased stretch (polar residues) spans 664-674 (PKSSRTTLQSK). Acidic residues predominate over residues 677 to 745 (SEEDDDEEDD…DDDEDEDNES (69 aa)). The span at 746–758 (EGSSSSSSSSGDS) shows a compositional bias: low complexity.

As to quaternary structure, homodimer. Part of Pol I pre-initiation complex (PIC), in which Pol I core assembles with RRN3 and promoter-bound UTBF and SL1/TIF-IB complex. Interacts with TOP2A in the context of Pol I complex. Interacts with TBP. Interacts with TAF1A. Interacts with PHF6. Interacts with CEBPA (isoform 1 and isoform 4). Interacts with DDX11. Interacts with NOP53. Interacts with RASL11A. Interacts with DHX33. Binds to IRS1 and PIK3CA. Interacts with ALKBH2. Post-translationally, phosphorylated and activated by PIK3CA.

Its subcellular location is the nucleus. It is found in the nucleolus. In terms of biological role, recognizes the ribosomal RNA gene promoter and activates transcription mediated by RNA polymerase I through cooperative interactions with the transcription factor SL1/TIF-IB complex. It binds specifically to the upstream control element. This chain is Nucleolar transcription factor 1 (Ubtf), found in Rattus norvegicus (Rat).